Reading from the N-terminus, the 321-residue chain is L-carnitine dehydrogenase (321 aa).

14 to 19 (GSGVIG) provides a ligand contact to NAD(+).

It belongs to the 3-hydroxyacyl-CoA dehydrogenase family. L-carnitine dehydrogenase subfamily. Homodimer.

It is found in the cytoplasm. The catalysed reaction is carnitine + NAD(+) = 3-dehydrocarnitine + NADH + H(+). It functions in the pathway amine and polyamine metabolism; carnitine metabolism. With respect to regulation, analogs of L-carnitine such as D-carnitine, glycine betaine and choline, are competitive inhibitors of L-carnitine oxidation. Catalyzes the NAD(+)-dependent oxidation of L-carnitine to 3-dehydrocarnitine. Is specific for L-carnitine and NAD(+) as substrates. D,L-3-hydroxybutyrate, L-lactate, ethanol, L-malate and D,L-isocitrate are not substrates. Is involved in a L-carnitine degradation pathway that allows P.aeruginosa to grow on L-carnitine as the sole source of carbon and nitrogen. The polypeptide is L-carnitine dehydrogenase (Pseudomonas aeruginosa (strain ATCC 15692 / DSM 22644 / CIP 104116 / JCM 14847 / LMG 12228 / 1C / PRS 101 / PAO1)).